Consider the following 308-residue polypeptide: Cyclin-D2-1 (308 aa).

Positions 286-308 (EGLSYDSSSPPPPKRRKRSPPGT) are disordered. Residues 298-308 (PKRRKRSPPGT) are compositionally biased toward basic residues.

It belongs to the cyclin family. Cyclin D subfamily.

The chain is Cyclin-D2-1 (CYCD2-1) from Oryza sativa subsp. japonica (Rice).